A 2073-amino-acid chain; its full sequence is Fatty acid synthase subunit beta (2073 aa).

The segment at 1-459 is acetyltransferase; it reads MVEAEQVHQS…VYSTDDAGDL (459 aa). Serine 270 acts as the For acetyltransferase activity in catalysis. An enoyl reductase region spans residues 470–858; sequence ALAVMITEKV…TRGIMFWKEL (389 aa). Phosphoserine is present on serine 1122. The dehydratase stretch occupies residues 1155 to 1644; the sequence is GPEYTWFRAI…LPNTELITKL (490 aa). The For dehydratase activity role is filled by histidine 1361. In terms of domain architecture, MaoC-like spans 1558 to 1667; that stretch reads PVFVTPPTNS…VEVLNQETSE (110 aa). Positions 1645–2073 are malonyl/palmitoyl transferase; the sequence is SHTGMINGRK…LQNWDEYESS (429 aa). Serine 1828 (for malonyltransferase activity) is an active-site residue. Serine 2073 carries the phosphoserine modification.

This sequence belongs to the fungal fatty acid synthetase subunit beta family. As to quaternary structure, [Alpha(6)beta(6)] hexamers of two multifunctional subunits (alpha and beta).

It catalyses the reaction acetyl-CoA + n malonyl-CoA + 2n NADPH + 4n H(+) = a long-chain-acyl-CoA + n CoA + n CO2 + 2n NADP(+).. It carries out the reaction holo-[ACP] + acetyl-CoA = acetyl-[ACP] + CoA. The enzyme catalyses holo-[ACP] + malonyl-CoA = malonyl-[ACP] + CoA. The catalysed reaction is a (3R)-hydroxyacyl-[ACP] = a (2E)-enoyl-[ACP] + H2O. It catalyses the reaction a 2,3-saturated acyl-[ACP] + NAD(+) = a (2E)-enoyl-[ACP] + NADH + H(+). It carries out the reaction (9Z)-octadecenoyl-[ACP] + H2O = (9Z)-octadecenoate + holo-[ACP] + H(+). Fatty acid synthetase catalyzes the formation of long-chain fatty acids from acetyl-CoA, malonyl-CoA and NADPH. The beta subunit contains domains for: [acyl-carrier-protein] acetyltransferase and malonyltransferase, S-acyl fatty acid synthase thioesterase, enoyl-[acyl-carrier-protein] reductase, and 3-hydroxypalmitoyl-[acyl-carrier-protein] dehydratase. This Schizosaccharomyces pombe (strain 972 / ATCC 24843) (Fission yeast) protein is Fatty acid synthase subunit beta (fas1).